Reading from the N-terminus, the 197-residue chain is Allatostatins (197 aa).

The first 27 residues, 1 to 27 (MRSRTSVLTSSLAFLYFFGIVGRSALA), serve as a signal peptide directing secretion. The propeptide occupies 28–56 (MEETPASSMNLQHYNNMLNPMVFDDTMPE). An Isoleucine amide modification is found at Ile-76. The propeptide occupies 80–86 (WIDTNDN). 4 positions are modified to leucine amide: Leu-96, Leu-106, Leu-154, and Leu-184. A disordered region spans residues 161 to 197 (YSGGQPLGSKRPNDMLSQRYHFGLGKRMSEDEEESSQ). Residues 188–197 (MSEDEEESSQ) constitute a propeptide that is removed on maturation.

It belongs to the allatostatin family.

It localises to the secreted. Functionally, neuropeptides. This Apis mellifera (Honeybee) protein is Allatostatins.